A 183-amino-acid chain; its full sequence is Ferredoxin-2, mitochondrial (183 aa).

Residues 1-52 (MAASMARGGVSARVLLQAARGTWWNRPGGTSGSGEGVALGTTRKFQATGSRP) constitute a mitochondrion transit peptide. Residues 45-65 (FQATGSRPAGEEDAGGPERPG) are disordered. The 103-residue stretch at 68 to 170 (VNVVFVDRSG…GAEFTLPKIT (103 aa)) folds into the 2Fe-2S ferredoxin-type domain. Positions 105, 111, 114, and 151 each coordinate [2Fe-2S] cluster.

This sequence belongs to the adrenodoxin/putidaredoxin family. In terms of assembly, component of the mitochondrial core iron-sulfur cluster (ISC) complex composed of NFS1, LYRM4, NDUFAB1, ISCU, FXN, and FDX2; this complex is a heterohexamer containing two copies of each monomer. Form a heterodimer complex with NFS1. Interacts (in both their reduced and oxidized states) with the cysteine desulfurase complex; this interaction stimulates cysteine desulfurase activity, and serves as a reductant for Fe-S cluster assembly. Requires [2Fe-2S] cluster as cofactor. As to expression, widely expressed, with highest levels in testis, kidney and brain (at protein level). Expressed in muscle (at protein level). Expressed in fibroblasts (at protein level).

Its subcellular location is the mitochondrion. It localises to the mitochondrion matrix. Functionally, electron donor, of the core iron-sulfur cluster (ISC) assembly complex, that acts to reduce the persulfide into sulfide during [2Fe-2S] clusters assembly on the scaffolding protein ISCU. The core iron-sulfur cluster (ISC) assembly complex is involved in the de novo synthesis of a [2Fe-2S] cluster, the first step of the mitochondrial iron-sulfur protein biogenesis. This process is initiated by the cysteine desulfurase complex (NFS1:LYRM4:NDUFAB1) that produces persulfide which is delivered on the scaffold protein ISCU in a FXN-dependent manner. Then this complex is stabilized by FDX2 which provides reducing equivalents to accomplish the [2Fe-2S] cluster assembly. Finally, the [2Fe-2S] cluster is transferred from ISCU to chaperone proteins, including HSCB, HSPA9 and GLRX5. Essential for coenzyme Q biosynthesis: together with FDXR, transfers the electrons required for the hydroxylation reaction performed by COQ6. In Homo sapiens (Human), this protein is Ferredoxin-2, mitochondrial.